Reading from the N-terminus, the 245-residue chain is Ubiquinone/menaquinone biosynthesis C-methyltransferase UbiE (245 aa).

S-adenosyl-L-methionine is bound by residues T71, D92, and 118 to 119 (DA).

The protein belongs to the class I-like SAM-binding methyltransferase superfamily. MenG/UbiE family.

The enzyme catalyses a 2-demethylmenaquinol + S-adenosyl-L-methionine = a menaquinol + S-adenosyl-L-homocysteine + H(+). It carries out the reaction a 2-methoxy-6-(all-trans-polyprenyl)benzene-1,4-diol + S-adenosyl-L-methionine = a 5-methoxy-2-methyl-3-(all-trans-polyprenyl)benzene-1,4-diol + S-adenosyl-L-homocysteine + H(+). It participates in quinol/quinone metabolism; menaquinone biosynthesis; menaquinol from 1,4-dihydroxy-2-naphthoate: step 2/2. The protein operates within cofactor biosynthesis; ubiquinone biosynthesis. Its function is as follows. Methyltransferase required for the conversion of demethylmenaquinol (DMKH2) to menaquinol (MKH2) and the conversion of 2-polyprenyl-6-methoxy-1,4-benzoquinol (DDMQH2) to 2-polyprenyl-3-methyl-6-methoxy-1,4-benzoquinol (DMQH2). The polypeptide is Ubiquinone/menaquinone biosynthesis C-methyltransferase UbiE (Neisseria gonorrhoeae (strain ATCC 700825 / FA 1090)).